A 68-amino-acid chain; its full sequence is YPQQPQPFPQQPIPQQPQPYPQQPQPFSQQPIPQQPQPYPQQPQPFPQQPIPLQPHQPYTQQTIWSMV.

Pro residues-rich tracts occupy residues 1–24 (YPQQPQPFPQQPIPQQPQPYPQQP) and 33–55 (PQQPQPYPQQPQPFPQQPIPLQP). The segment at 1–68 (YPQQPQPFPQ…YTQQTIWSMV (68 aa)) is disordered. Over residues 59–68 (YTQQTIWSMV) the composition is skewed to polar residues.

Developing endosperm.

Its function is as follows. Sulfur-poor seed storage protein. This Hordeum vulgare (Barley) protein is C-hordein.